We begin with the raw amino-acid sequence, 134 residues long: Ribonuclease VapC1 (134 aa).

Positions Tyr3–Trp132 constitute a PINc domain. Positions 6 and 99 each coordinate Mg(2+).

Belongs to the PINc/VapC protein family. Mg(2+) serves as cofactor.

Its function is as follows. Toxic component of a type II toxin-antitoxin (TA) system. Acts as an RNase, its toxic effect is neutralized by VapB1 antitoxin. This is Ribonuclease VapC1 from Haemophilus influenzae (strain ATCC 51907 / DSM 11121 / KW20 / Rd).